The chain runs to 353 residues: Photosystem II protein D1 (353 aa).

At Thr-2 the chain carries N-acetylthreonine. Thr-2 is subject to Phosphothreonine. A run of 3 helical transmembrane segments spans residues 29 to 46 (YIGW…TATS), 118 to 133 (HFFI…EWEL), and 142 to 156 (WIAV…AATA). His-118 serves as a coordination point for chlorophyll a. Residue Tyr-126 participates in pheophytin a binding. 2 residues coordinate [CaMn4O5] cluster: Asp-170 and Glu-189. Residues 197–218 (FHMLGVAGVFGGSLFSAMHGSL) form a helical membrane-spanning segment. Residue His-198 participates in chlorophyll a binding. Residues His-215 and 264–265 (SF) contribute to the a quinone site. Fe cation is bound at residue His-215. His-272 contacts Fe cation. A helical transmembrane segment spans residues 274-288 (FLAIWPVVGIWFTAL). His-332, Glu-333, Asp-342, and Ala-344 together coordinate [CaMn4O5] cluster. Residues 345–353 (SVEAPSING) constitute a propeptide that is removed on maturation.

Belongs to the reaction center PufL/M/PsbA/D family. In terms of assembly, PSII is composed of 1 copy each of membrane proteins PsbA, PsbB, PsbC, PsbD, PsbE, PsbF, PsbH, PsbI, PsbJ, PsbK, PsbL, PsbM, PsbT, PsbX, PsbY, PsbZ, Psb30/Ycf12, at least 3 peripheral proteins of the oxygen-evolving complex and a large number of cofactors. It forms dimeric complexes. The D1/D2 heterodimer binds P680, chlorophylls that are the primary electron donor of PSII, and subsequent electron acceptors. It shares a non-heme iron and each subunit binds pheophytin, quinone, additional chlorophylls, carotenoids and lipids. D1 provides most of the ligands for the Mn4-Ca-O5 cluster of the oxygen-evolving complex (OEC). There is also a Cl(-1) ion associated with D1 and D2, which is required for oxygen evolution. The PSII complex binds additional chlorophylls, carotenoids and specific lipids. is required as a cofactor. Tyr-161 forms a radical intermediate that is referred to as redox-active TyrZ, YZ or Y-Z. Post-translationally, C-terminally processed by CTPA; processing is essential to allow assembly of the oxygen-evolving complex and thus photosynthetic growth.

The protein localises to the plastid. It localises to the chloroplast thylakoid membrane. It carries out the reaction 2 a plastoquinone + 4 hnu + 2 H2O = 2 a plastoquinol + O2. Its function is as follows. Photosystem II (PSII) is a light-driven water:plastoquinone oxidoreductase that uses light energy to abstract electrons from H(2)O, generating O(2) and a proton gradient subsequently used for ATP formation. It consists of a core antenna complex that captures photons, and an electron transfer chain that converts photonic excitation into a charge separation. The D1/D2 (PsbA/PsbD) reaction center heterodimer binds P680, the primary electron donor of PSII as well as several subsequent electron acceptors. The polypeptide is Photosystem II protein D1 (Stigeoclonium helveticum (Green alga)).